Here is a 281-residue protein sequence, read N- to C-terminus: Probable endonuclease 4 (281 aa).

Residues histidine 69, histidine 109, glutamate 145, aspartate 179, histidine 182, histidine 216, aspartate 229, histidine 231, and glutamate 261 each contribute to the Zn(2+) site.

This sequence belongs to the AP endonuclease 2 family. Requires Zn(2+) as cofactor.

The enzyme catalyses Endonucleolytic cleavage to 5'-phosphooligonucleotide end-products.. Its function is as follows. Endonuclease IV plays a role in DNA repair. It cleaves phosphodiester bonds at apurinic or apyrimidinic (AP) sites, generating a 3'-hydroxyl group and a 5'-terminal sugar phosphate. The chain is Probable endonuclease 4 from Glaesserella parasuis serovar 5 (strain SH0165) (Haemophilus parasuis).